The sequence spans 334 residues: Malate dehydrogenase, cytoplasmic (334 aa).

11–17 contacts NAD(+); it reads GAAGQIA. Substrate contacts are provided by Arg-92 and Arg-98. Residues Asn-105, Gln-112, and 129 to 131 each bind NAD(+); that span reads VGN. Residues Asn-131 and Arg-162 each coordinate substrate. Catalysis depends on His-187, which acts as the Proton acceptor.

It belongs to the LDH/MDH superfamily. MDH type 2 family. Homodimer.

It localises to the cytoplasm. The protein resides in the cytosol. It catalyses the reaction (S)-malate + NAD(+) = oxaloacetate + NADH + H(+). The catalysed reaction is (S)-2-hydroxyglutarate + NAD(+) = 2-oxoglutarate + NADH + H(+). In terms of biological role, catalyzes the reduction of aromatic alpha-keto acids in the presence of NADH. Plays essential roles in the malate-aspartate shuttle and the tricarboxylic acid cycle, important in mitochondrial NADH supply for oxidative phosphorylation. Catalyzes the reduction of 2-oxoglutarate to 2-hydroxyglutarate, leading to elevated reactive oxygen species (ROS). The sequence is that of Malate dehydrogenase, cytoplasmic (mdh1) from Xenopus laevis (African clawed frog).